The primary structure comprises 138 residues: Small ribosomal subunit protein uS11c (138 aa).

The interval Met-1–Arg-24 is disordered. Residues Gly-9–Arg-24 show a composition bias toward basic residues.

Belongs to the universal ribosomal protein uS11 family. In terms of assembly, part of the 30S ribosomal subunit.

The protein resides in the plastid. Its subcellular location is the chloroplast. This chain is Small ribosomal subunit protein uS11c, found in Panax ginseng (Korean ginseng).